We begin with the raw amino-acid sequence, 343 residues long: Phenylalanine--tRNA ligase alpha subunit (343 aa).

E264 provides a ligand contact to Mg(2+).

This sequence belongs to the class-II aminoacyl-tRNA synthetase family. Phe-tRNA synthetase alpha subunit type 1 subfamily. Tetramer of two alpha and two beta subunits. Mg(2+) is required as a cofactor.

It is found in the cytoplasm. The catalysed reaction is tRNA(Phe) + L-phenylalanine + ATP = L-phenylalanyl-tRNA(Phe) + AMP + diphosphate + H(+). This chain is Phenylalanine--tRNA ligase alpha subunit, found in Azoarcus sp. (strain BH72).